We begin with the raw amino-acid sequence, 193 residues long: Superoxide dismutase [Fe] (193 aa).

His-27 lines the Fe cation pocket. The residue at position 51 (Lys-51) is an N6-acetyllysine. 3 residues coordinate Fe cation: His-74, Asp-157, and His-161.

It belongs to the iron/manganese superoxide dismutase family. In terms of assembly, homodimer. Fe cation serves as cofactor.

The enzyme catalyses 2 superoxide + 2 H(+) = H2O2 + O2. Its function is as follows. Destroys superoxide anion radicals which are normally produced within the cells and which are toxic to biological systems. The sequence is that of Superoxide dismutase [Fe] (sodB) from Escherichia coli O157:H7.